The following is a 139-amino-acid chain: Large-conductance mechanosensitive channel (139 aa).

2 helical membrane passes run 16–36 (VIDL…VDSL) and 83–103 (GQFI…FVAV).

The protein belongs to the MscL family. Homopentamer.

It is found in the cell inner membrane. In terms of biological role, channel that opens in response to stretch forces in the membrane lipid bilayer. May participate in the regulation of osmotic pressure changes within the cell. In Aromatoleum aromaticum (strain DSM 19018 / LMG 30748 / EbN1) (Azoarcus sp. (strain EbN1)), this protein is Large-conductance mechanosensitive channel.